The following is a 439-amino-acid chain: Tol-Pal system protein TolB (439 aa).

The N-terminal stretch at 1 to 22 is a signal peptide; sequence MTKFPRWLAILVGLLFPLSALT.

It belongs to the TolB family. In terms of assembly, the Tol-Pal system is composed of five core proteins: the inner membrane proteins TolA, TolQ and TolR, the periplasmic protein TolB and the outer membrane protein Pal. They form a network linking the inner and outer membranes and the peptidoglycan layer.

Its subcellular location is the periplasm. Part of the Tol-Pal system, which plays a role in outer membrane invagination during cell division and is important for maintaining outer membrane integrity. The chain is Tol-Pal system protein TolB from Xylella fastidiosa (strain M12).